The chain runs to 235 residues: Non-structural maintenance of chromosomes element 1 homolog (235 aa).

The RING-type; atypical zinc finger occupies 181–225 (IKNCTLCKCLVLWDIRCGSCNIQYHRGCIQTYLQRRDICPSCGNL). Residue T185 is modified to Phosphothreonine.

Belongs to the NSE1 family. As to quaternary structure, component of the Smc5-Smc6 complex which consists at least of Smc5, Smc6, Nse1, Nse2, Nse4 and MAGE. Nse1, Nse4 and MAGE probably form a subcomplex that bridges the head domains of the Smc5-Smc6 heterodimer. Interacts with MAGE and Nse4.

It is found in the nucleus. The enzyme catalyses S-ubiquitinyl-[E2 ubiquitin-conjugating enzyme]-L-cysteine + [acceptor protein]-L-lysine = [E2 ubiquitin-conjugating enzyme]-L-cysteine + N(6)-ubiquitinyl-[acceptor protein]-L-lysine.. Functionally, component of the SMC5-SMC6 complex, a complex involved in repair of DNA double-strand breaks by homologous recombination. The complex may promote sister chromatid homologous recombination by recruiting the SMC1-SMC3 cohesin complex to double-strand breaks. This chain is Non-structural maintenance of chromosomes element 1 homolog, found in Drosophila melanogaster (Fruit fly).